The chain runs to 293 residues: N(1)-aminopropylagmatine ureohydrolase (293 aa).

The Mn(2+) site is built by His105, Asp128, His130, Asp132, Asp210, and Asp212.

Belongs to the arginase family. Mn(2+) serves as cofactor.

It is found in the cytoplasm. The catalysed reaction is N(1)-(3-aminopropyl)agmatine + H2O = urea + spermidine. Its pathway is amine and polyamine biosynthesis; spermidine biosynthesis. Its function is as follows. Involved in the biosynthesis of polyamines which are thought to support the growth of thermophilic microorganisms under high-temperature conditions. It seems that long-chain and branched-chain of polyamines effectively stabilize DNA and RNA, respectively. Catalyzes the decarboxylation of N1-(3-aminopropyl)agmatine to yield spermidine and urea. It cannot use agmatine as substrate. The polypeptide is N(1)-aminopropylagmatine ureohydrolase (Thermus thermophilus (strain ATCC 27634 / DSM 579 / HB8)).